Consider the following 173-residue polypeptide: Alpha-crystallin A chain (173 aa).

Met-1 carries the N-acetylmethionine modification. Positions 1 to 63 are required for complex formation with BFSP1 and BFSP2; it reads MDVTIQHPWF…RTVLDSGISE (63 aa). Position 6 is a deamidated glutamine; partial (Gln-6). Ser-45 carries the post-translational modification Phosphoserine. Gln-50 carries the post-translational modification Deamidated glutamine; partial. Positions 52 to 162 constitute a sHSP domain; that stretch reads LFRTVLDSGI…GHSERAIPVS (111 aa). N6-acetyllysine is present on Lys-70. Position 90 is a deamidated glutamine; partial (Gln-90). An N6-acetyllysine modification is found at Lys-99. Residues His-100, Glu-102, and His-107 each contribute to the Zn(2+) site. Phosphoserine is present on Ser-122. Asn-123 is modified (deamidated asparagine; partial). The tract at residues 145–173 is disordered; sequence KVQSGLDAGHSERAIPVSREEKPSSAPSS. Gln-147 carries the deamidated glutamine; partial modification. A compositionally biased stretch (basic and acidic residues) spans 153 to 167; that stretch reads GHSERAIPVSREEKP. Residue His-154 participates in Zn(2+) binding. O-linked (GlcNAc) serine glycosylation occurs at Ser-162.

The protein belongs to the small heat shock protein (HSP20) family. In terms of assembly, heteromer composed of three CRYAA and one CRYAB subunits. Inter-subunit bridging via zinc ions enhances stability, which is crucial as there is no protein turn over in the lens. Can also form homodimers and homotetramers (dimers of dimers) which serve as the building blocks of homooligomers. Within homooligomers, the zinc-binding motif is created from residues of 3 different molecules. His-100 and Glu-102 from one molecule are ligands of the zinc ion, and His-107 and His-154 residues from additional molecules complete the site with tetrahedral coordination geometry. Part of a complex required for lens intermediate filament formation composed of BFSP1, BFSP2 and CRYAA. Post-translationally, acetylation at Lys-70 may increase chaperone activity. Undergoes age-dependent proteolytical cleavage at the C-terminus.

It localises to the cytoplasm. It is found in the nucleus. Contributes to the transparency and refractive index of the lens. Acts as a chaperone, preventing aggregation of various proteins under a wide range of stress conditions. Required for the correct formation of lens intermediate filaments as part of a complex composed of BFSP1, BFSP2 and CRYAA. This Ochotona princeps (Southern American pika) protein is Alpha-crystallin A chain (CRYAA).